A 1023-amino-acid chain; its full sequence is Exportin-T (1023 aa).

Belongs to the exportin family.

It is found in the nucleus. It localises to the cytoplasm. Its function is as follows. tRNA nucleus export receptor which facilitates tRNA translocation across the nuclear pore complex. Involved in pre-tRNA splicing, probably by affecting the interaction of pre-tRNA with splicing endonuclease. The polypeptide is Exportin-T (los1) (Botryotinia fuckeliana (strain B05.10) (Noble rot fungus)).